We begin with the raw amino-acid sequence, 417 residues long: MYSPDTTKYLIHLNLQAEGVVEKPDVVGAIFGQTEGLLGEDLDLRDLQRTGRVGRIDVQISSKRGETKGDILISSSLDRAETAILAASLETIDRVGPCVAHVVVEGIEDIRVTKRRKIVDRAKELLLDHFEDGSIDSYELLDEVREAIRVEKIGSLGDEKIPAGPNVMDSDAIIIVEGRADVINLLKYGIKNAVAVEGTNVPAQIVDLADKKTATAFLDGDRGGELILRELLQVADIDYVAFSPRGKSVEDMARKEIIKALRNKVPVEYVRDQFYGDVPGEKRTQDLRPQKPGASEQNSIKKENVENENESTPTSFEPISEPAPPVTLHDHMERVSGHLIARFLSPEFTILNETRADDVEMAIDQMTTEVSGLVIDRVVDQKLLDRLVGKGVEFVAARDFNGIIKRPLSIRLMKIAQ.

Positions 171-257 constitute a Toprim domain; sequence DAIIIVEGRA…SVEDMARKEI (87 aa). Residues glutamate 177, aspartate 219, and aspartate 221 each contribute to the Mg(2+) site. The segment at 278 to 325 is disordered; that stretch reads VPGEKRTQDLRPQKPGASEQNSIKKENVENENESTPTSFEPISEPAPP. The span at 279 to 289 shows a compositional bias: basic and acidic residues; it reads PGEKRTQDLRP.

The protein belongs to the archaeal DnaG primase family. As to quaternary structure, forms a ternary complex with MCM helicase and DNA. Mg(2+) serves as cofactor.

The enzyme catalyses ssDNA + n NTP = ssDNA/pppN(pN)n-1 hybrid + (n-1) diphosphate.. RNA polymerase that catalyzes the synthesis of short RNA molecules used as primers for DNA polymerase during DNA replication. The chain is DNA primase DnaG from Methanosphaerula palustris (strain ATCC BAA-1556 / DSM 19958 / E1-9c).